A 342-amino-acid chain; its full sequence is Ribosomal RNA small subunit methyltransferase H (342 aa).

S-adenosyl-L-methionine contacts are provided by residues 42-44, D61, F88, D119, and Q126; that span reads GGH.

Belongs to the methyltransferase superfamily. RsmH family.

The protein resides in the cytoplasm. It catalyses the reaction cytidine(1402) in 16S rRNA + S-adenosyl-L-methionine = N(4)-methylcytidine(1402) in 16S rRNA + S-adenosyl-L-homocysteine + H(+). In terms of biological role, specifically methylates the N4 position of cytidine in position 1402 (C1402) of 16S rRNA. The polypeptide is Ribosomal RNA small subunit methyltransferase H (Corynebacterium jeikeium (strain K411)).